Reading from the N-terminus, the 368-residue chain is MYLKDSKIIVIKIGSSLLIDDKKKVRRKWLTEFAKDIQELIKQNKKVIIVSSGAIAMGCKKLNISKKNLKIDKSQAVASIGQIELMNLFSETFVKLKINISQILLTLEDTEQRRRALNAKRTFDNLFKLGFVPIVNENDTIATSEIKYGDNDRLASRVAQISGADSLILLSDVDGLYTHNPKIYKNAKLIKEIRNIDKDIEKIATKSISEHGTGGMKTKIDAAKICQLSGCQMVIANGLVNRPIKKITEENKCTWFLPKVSKLDARKKWIISSVSPKGALIIDDGAKQALSNGKSLLAAGIKKVSGRFSKGDHIKVLDKNNYECARGLSSFSSNEIEKIMGHHSKEIEKLLGYISKSEVIHKDDIVEV.

Lysine 12 contacts ATP. Serine 52, aspartate 139, and asparagine 151 together coordinate substrate. ATP contacts are provided by residues 171–172 (SD) and 213–219 (TGGMKTK). The PUA domain occupies 277 to 354 (KGALIIDDGA…KEIEKLLGYI (78 aa)).

Belongs to the glutamate 5-kinase family.

It is found in the cytoplasm. The enzyme catalyses L-glutamate + ATP = L-glutamyl 5-phosphate + ADP. The protein operates within amino-acid biosynthesis; L-proline biosynthesis; L-glutamate 5-semialdehyde from L-glutamate: step 1/2. In terms of biological role, catalyzes the transfer of a phosphate group to glutamate to form L-glutamate 5-phosphate. The polypeptide is Glutamate 5-kinase (Pelagibacter ubique (strain HTCC1062)).